A 280-amino-acid chain; its full sequence is Phosphatidylinositol N-acetylglucosaminyltransferase GPI2 subunit (280 aa).

The Cytoplasmic portion of the chain corresponds to 1–53 (MTRSPWKRLLWLKQEYPDNYTDPSFIELRARQKAESNQKSDRKLSEAARAQIR). Residues 54–74 (LDFISFYQTILNTSFIYITFT) traverse the membrane as a helical segment. Tyr-75 is a topological domain (extracellular). Residues 76 to 96 (IYYYGFDPIPPTIFLSFITLI) traverse the membrane as a helical segment. Residues 97–108 (ISRTKVDPLLSS) are Cytoplasmic-facing. A helical membrane pass occupies residues 109–129 (FMDVKSSLIITFAMLTLSPVL). Over 130–135 (KSLSKT) the chain is Extracellular. The chain crosses the membrane as a helical span at residues 136–156 (TASDSIWTLSFWLTLWYIFVI). Residues 157–189 (SSTKSKDKPSNLSTNILVALVAVLSSRLSTTID) are Cytoplasmic-facing. The chain crosses the membrane as a helical span at residues 190–210 (VFCFLLICIQLNIILPTYLSV). At 211-220 (TNKVVPIISN) the chain is on the extracellular side. The helical transmembrane segment at 221–241 (IIVYSFLNVALGWIYMLLIFF) threads the bilayer. Residues 242–280 (ASVFYITVLPKWFIYWKINYHKRDNDLLSTWDARTPILD) lie on the Cytoplasmic side of the membrane.

It belongs to the PIGC family. As to quaternary structure, component of the phosphatidylinositol N-acetylglucosaminyltransferase (GPI-GlcNAc transferase) complex composed of at least GPI1, GPI2, GPI3, GPI15, GPI19 and ERI1. Interacts with ERI1.

The protein localises to the membrane. It catalyses the reaction a 1,2-diacyl-sn-glycero-3-phospho-(1D-myo-inositol) + UDP-N-acetyl-alpha-D-glucosamine = a 6-(N-acetyl-alpha-D-glucosaminyl)-1-(1,2-diacyl-sn-glycero-3-phospho)-1D-myo-inositol + UDP + H(+). Its pathway is glycolipid biosynthesis; glycosylphosphatidylinositol-anchor biosynthesis. Functionally, part of the complex catalyzing the transfer of N-acetylglucosamine from UDP-N-acetylglucosamine to phosphatidylinositol, the first step of GPI biosynthesis. The chain is Phosphatidylinositol N-acetylglucosaminyltransferase GPI2 subunit (GPI2) from Saccharomyces cerevisiae (strain ATCC 204508 / S288c) (Baker's yeast).